We begin with the raw amino-acid sequence, 494 residues long: UDP-N-acetylmuramoyl-L-alanyl-D-glutamate--L-lysine ligase (494 aa).

Ser-30 provides a ligand contact to UDP-N-acetyl-alpha-D-muramoyl-L-alanyl-D-glutamate. 110-116 is a binding site for ATP; sequence GTNGKTS. UDP-N-acetyl-alpha-D-muramoyl-L-alanyl-D-glutamate is bound by residues 152-153, Ser-179, and Arg-187; that span reads TT. Lys-219 carries the N6-carboxylysine modification. An L-lysine recognition motif motif is present at residues 406–409; the sequence is DNPA.

It belongs to the MurCDEF family. MurE subfamily. In terms of processing, carboxylation is probably crucial for Mg(2+) binding and, consequently, for the gamma-phosphate positioning of ATP.

It localises to the cytoplasm. The enzyme catalyses UDP-N-acetyl-alpha-D-muramoyl-L-alanyl-D-glutamate + L-lysine + ATP = UDP-N-acetyl-alpha-D-muramoyl-L-alanyl-gamma-D-glutamyl-L-lysine + ADP + phosphate + H(+). Its pathway is cell wall biogenesis; peptidoglycan biosynthesis. Its function is as follows. Catalyzes the addition of L-lysine to the nucleotide precursor UDP-N-acetylmuramoyl-L-alanyl-D-glutamate (UMAG) in the biosynthesis of bacterial cell-wall peptidoglycan. The sequence is that of UDP-N-acetylmuramoyl-L-alanyl-D-glutamate--L-lysine ligase from Staphylococcus epidermidis (strain ATCC 35984 / DSM 28319 / BCRC 17069 / CCUG 31568 / BM 3577 / RP62A).